The following is a 205-amino-acid chain: Small ribosomal subunit protein uS4 (205 aa).

A compositionally biased stretch (basic and acidic residues) spans 1 to 16 (MSKRESSKYKIDRRMG). Positions 1 to 46 (MSKRESSKYKIDRRMGENIWGRPKSPVNRREYGPGQHGQRRKSKLS) are disordered. Residues 94–157 (SRLDAIVYRA…KQLVTVLEAV (64 aa)) form the S4 RNA-binding domain.

The protein belongs to the universal ribosomal protein uS4 family. Part of the 30S ribosomal subunit. Contacts protein S5. The interaction surface between S4 and S5 is involved in control of translational fidelity.

One of the primary rRNA binding proteins, it binds directly to 16S rRNA where it nucleates assembly of the body of the 30S subunit. In terms of biological role, with S5 and S12 plays an important role in translational accuracy. This is Small ribosomal subunit protein uS4 from Rhizobium meliloti (strain 1021) (Ensifer meliloti).